The chain runs to 279 residues: Vacuolar iron transporter cccA (279 aa).

Positions 1 to 44 (MLGGRHSHWSPQDLEEQAFSPYGTFPPSPTESTETSSSISSTRP) are disordered. A compositionally biased stretch (low complexity) spans 30–44 (TESTETSSSISSTRP). 5 consecutive transmembrane segments (helical) span residues 55–75 (ILGL…LSAL), 80–100 (VVVV…GLGG), 185–205 (ITLA…YFMV), 208–228 (VLVA…VFGY), and 243–263 (IVAG…AAGA).

The protein belongs to the CCC1 family.

It localises to the vacuole membrane. The catalysed reaction is Fe(2+)(in) = Fe(2+)(out). Vacuolar iron transporter involved in the transfer of iron from the cytosol to the vacuole for intracellular iron storage. Plays an essential role in iron detoxification during high iron conditions. In Arthroderma benhamiae (strain ATCC MYA-4681 / CBS 112371) (Trichophyton mentagrophytes), this protein is Vacuolar iron transporter cccA.